The following is a 345-amino-acid chain: Uroporphyrinogen decarboxylase (345 aa).

Substrate contacts are provided by residues 27-31 (RQAGR), Phe46, Asp76, Tyr152, Ser207, and His320.

The protein belongs to the uroporphyrinogen decarboxylase family. As to quaternary structure, homodimer.

It is found in the cytoplasm. The catalysed reaction is uroporphyrinogen III + 4 H(+) = coproporphyrinogen III + 4 CO2. It functions in the pathway porphyrin-containing compound metabolism; protoporphyrin-IX biosynthesis; coproporphyrinogen-III from 5-aminolevulinate: step 4/4. Functionally, catalyzes the decarboxylation of four acetate groups of uroporphyrinogen-III to yield coproporphyrinogen-III. In Geobacillus kaustophilus (strain HTA426), this protein is Uroporphyrinogen decarboxylase.